The following is a 369-amino-acid chain: Phenylalanine--tRNA ligase alpha subunit (369 aa).

Position 269 (E269) interacts with Mg(2+).

The protein belongs to the class-II aminoacyl-tRNA synthetase family. Phe-tRNA synthetase alpha subunit type 1 subfamily. As to quaternary structure, tetramer of two alpha and two beta subunits. The cofactor is Mg(2+).

It localises to the cytoplasm. The enzyme catalyses tRNA(Phe) + L-phenylalanine + ATP = L-phenylalanyl-tRNA(Phe) + AMP + diphosphate + H(+). The protein is Phenylalanine--tRNA ligase alpha subunit of Brucella anthropi (strain ATCC 49188 / DSM 6882 / CCUG 24695 / JCM 21032 / LMG 3331 / NBRC 15819 / NCTC 12168 / Alc 37) (Ochrobactrum anthropi).